A 122-amino-acid chain; its full sequence is Large ribosomal subunit protein uL14 (122 aa).

This sequence belongs to the universal ribosomal protein uL14 family. In terms of assembly, part of the 50S ribosomal subunit. Forms a cluster with proteins L3 and L19. In the 70S ribosome, L14 and L19 interact and together make contacts with the 16S rRNA in bridges B5 and B8.

Its function is as follows. Binds to 23S rRNA. Forms part of two intersubunit bridges in the 70S ribosome. The chain is Large ribosomal subunit protein uL14 from Staphylococcus haemolyticus (strain JCSC1435).